The chain runs to 376 residues: 2-oxoglutarate synthase subunit KorA (376 aa).

Heterotetramer of the KorA, KorB, KorC and KorD subunits.

The catalysed reaction is 2 oxidized [2Fe-2S]-[ferredoxin] + 2-oxoglutarate + CoA = succinyl-CoA + 2 reduced [2Fe-2S]-[ferredoxin] + CO2 + H(+). The polypeptide is 2-oxoglutarate synthase subunit KorA (korA) (Methanothermobacter thermautotrophicus (strain ATCC 29096 / DSM 1053 / JCM 10044 / NBRC 100330 / Delta H) (Methanobacterium thermoautotrophicum)).